We begin with the raw amino-acid sequence, 639 residues long: 1-deoxy-D-xylulose-5-phosphate synthase 1 (639 aa).

Thiamine diphosphate contacts are provided by residues H79 and 120 to 122 (AHS). A Mg(2+)-binding site is contributed by D155. Residues 156–157 (GA), N184, Y293, and E373 contribute to the thiamine diphosphate site. N184 serves as a coordination point for Mg(2+).

It belongs to the transketolase family. DXPS subfamily. Homodimer. Requires Mg(2+) as cofactor. The cofactor is thiamine diphosphate.

The enzyme catalyses D-glyceraldehyde 3-phosphate + pyruvate + H(+) = 1-deoxy-D-xylulose 5-phosphate + CO2. The protein operates within metabolic intermediate biosynthesis; 1-deoxy-D-xylulose 5-phosphate biosynthesis; 1-deoxy-D-xylulose 5-phosphate from D-glyceraldehyde 3-phosphate and pyruvate: step 1/1. In terms of biological role, catalyzes the acyloin condensation reaction between C atoms 2 and 3 of pyruvate and glyceraldehyde 3-phosphate to yield 1-deoxy-D-xylulose-5-phosphate (DXP). This is 1-deoxy-D-xylulose-5-phosphate synthase 1 from Jannaschia sp. (strain CCS1).